A 150-amino-acid polypeptide reads, in one-letter code: Large ribosomal subunit protein bL9 (150 aa).

This sequence belongs to the bacterial ribosomal protein bL9 family.

Functionally, binds to the 23S rRNA. The protein is Large ribosomal subunit protein bL9 of Baumannia cicadellinicola subsp. Homalodisca coagulata.